Consider the following 614-residue polypeptide: Glucosidase 2 subunit beta (614 aa).

An N-terminal signal peptide occupies residues 1–19; the sequence is MGLHAILLLLLLRISASAA. Asn115 carries an N-linked (GlcNAc...) asparagine glycan. Composition is skewed to basic and acidic residues over residues 194–222, 231–272, and 324–351; these read EEERLRKEKEEKRMKEEAEKQAADEKKAS, QENH…HDPE, and TGEKVDEVSKDDKNEHEAEHDMPEHSEE. The interval 194-396 is disordered; it reads EEERLRKEKE…SHESDDEYVD (203 aa). Acidic residues predominate over residues 352–364; it reads THEDESDVPESAE. Residues 372 to 382 show a composition bias toward basic and acidic residues; sequence SEVEDDRHKYD. Over residues 383–396 the composition is skewed to acidic residues; that stretch reads DEDFSHESDDEYVD. Residues 497 to 592 enclose the MRH domain; that stretch reads DQCFESKEGK…VLSTPALCDE (96 aa). 3 cysteine pairs are disulfide-bonded: Cys499-Cys512, Cys549-Cys578, and Cys563-Cys590.

Heterodimer of a catalytic alpha subunit and a beta subunit.

It is found in the endoplasmic reticulum. It functions in the pathway glycan metabolism; N-glycan metabolism. Its function is as follows. Regulatory subunit of glucosidase II. May be required for defense response elicited by pathogen-associated molecular patterns (PAMPs). The chain is Glucosidase 2 subunit beta from Oryza sativa subsp. japonica (Rice).